The sequence spans 455 residues: Tryptophan dimethylallyltransferase (455 aa).

L-tryptophan contacts are provided by residues 79–80 and Glu-88; that span reads VL. 3 residues coordinate substrate: Arg-99, Lys-186, and Tyr-188. Tyr-190 and Arg-256 together coordinate L-tryptophan. The substrate site is built by Arg-269, Lys-271, Tyr-273, Gln-355, Tyr-357, Tyr-421, and Tyr-425.

The protein belongs to the tryptophan dimethylallyltransferase family. As to quaternary structure, homodimer.

The catalysed reaction is L-tryptophan + dimethylallyl diphosphate = 4-(3-methylbut-2-enyl)-L-tryptophan + diphosphate. It participates in alkaloid biosynthesis; ergot alkaloid biosynthesis. In terms of biological role, tryptophan dimethylallyltransferase; part of the gene cluster that mediates the biosynthesis of fungal ergot alkaloid. DmaW catalyzes the first step of ergot alkaloid biosynthesis by condensing dimethylallyl diphosphate (DMAP) and tryptophan to form 4-dimethylallyl-L-tryptophan. The second step is catalyzed by the methyltransferase easF that methylates 4-dimethylallyl-L-tryptophan in the presence of S-adenosyl-L-methionine, resulting in the formation of 4-dimethylallyl-L-abrine. The catalase easC and the FAD-dependent oxidoreductase easE then transform 4-dimethylallyl-L-abrine to chanoclavine-I which is further oxidized by easD in the presence of NAD(+), resulting in the formation of chanoclavine-I aldehyde. Agroclavine dehydrogenase easG then mediates the conversion of chanoclavine-I aldehyde to agroclavine via a non-enzymatic adduct reaction: the substrate is an iminium intermediate that is formed spontaneously from chanoclavine-I aldehyde in the presence of glutathione. Further conversion of agroclavine to paspalic acid is a two-step process involving oxidation of agroclavine to elymoclavine and of elymoclavine to paspalic acid, the second step being performed by the elymoclavine oxidase cloA. However, cloA does not encode a functional enzyme indicating that C.fusiformis terminates its ergot alkaloid pathway at elymoclavine. The protein is Tryptophan dimethylallyltransferase of Claviceps fusiformis (Ergot fungus).